Reading from the N-terminus, the 388-residue chain is ATP phosphoribosyltransferase regulatory subunit (388 aa).

The protein belongs to the class-II aminoacyl-tRNA synthetase family. HisZ subfamily. Heteromultimer composed of HisG and HisZ subunits.

It is found in the cytoplasm. It participates in amino-acid biosynthesis; L-histidine biosynthesis; L-histidine from 5-phospho-alpha-D-ribose 1-diphosphate: step 1/9. Its function is as follows. Required for the first step of histidine biosynthesis. May allow the feedback regulation of ATP phosphoribosyltransferase activity by histidine. The protein is ATP phosphoribosyltransferase regulatory subunit of Acinetobacter baumannii (strain SDF).